The primary structure comprises 67 residues: Preprofallaxidin-1 (67 aa).

The N-terminal stretch at 1–22 (MASLKKSLFLVLFLGMVSLSIC) is a signal peptide. Positions 23–46 (DKEKREGENEEEEEEHEEESEEKR) are excised as a propeptide. The tract at residues 24–46 (KEKREGENEEEEEEHEEESEEKR) is disordered. Residues 30–42 (ENEEEEEEHEEES) are compositionally biased toward acidic residues.

In terms of tissue distribution, expressed by the skin glands.

The protein localises to the secreted. Its function is as follows. Fallaxidin-4.1 shows antibacterial activity against the Gram-positive bacteria L.lactis (MIC=12 uM), M.luteus (MIC=100 uM), S.epidermidis (MIC=100 uM) and S.uberis (MIC=50 uM). No antibacterial activity against the Gram-positive bacteria B.cereus, E.faecalis, L.innocua, S.aureus, or the Gram-negative bacteria E.cloacae and E.coli. Inhibits the formation of NO by neuronal nitric oxide synthase with an IC(50) of 13.3 uM. The protein is Preprofallaxidin-1 of Litoria fallax (Eastern dwarf tree frog).